Here is a 439-residue protein sequence, read N- to C-terminus: Tubulin beta chain (439 aa).

8 residues coordinate GTP: Gln-11, Glu-69, Ser-138, Gly-142, Thr-143, Gly-144, Asn-204, and Asn-226. Position 69 (Glu-69) interacts with Mg(2+).

The protein belongs to the tubulin family. As to quaternary structure, dimer of alpha and beta chains. A typical microtubule is a hollow water-filled tube with an outer diameter of 25 nm and an inner diameter of 15 nM. Alpha-beta heterodimers associate head-to-tail to form protofilaments running lengthwise along the microtubule wall with the beta-tubulin subunit facing the microtubule plus end conferring a structural polarity. Microtubules usually have 13 protofilaments but different protofilament numbers can be found in some organisms and specialized cells. Mg(2+) is required as a cofactor.

It is found in the cytoplasm. The protein localises to the cytoskeleton. Functionally, tubulin is the major constituent of microtubules, a cylinder consisting of laterally associated linear protofilaments composed of alpha- and beta-tubulin heterodimers. Microtubules grow by the addition of GTP-tubulin dimers to the microtubule end, where a stabilizing cap forms. Below the cap, tubulin dimers are in GDP-bound state, owing to GTPase activity of alpha-tubulin. In Encephalitozoon intestinalis (Microsporidian parasite), this protein is Tubulin beta chain (TUB2).